A 599-amino-acid chain; its full sequence is Elongation factor 4 (599 aa).

Residues 5 to 187 enclose the tr-type G domain; the sequence is NHIRNFSIIA…QIVQLVPPPE (183 aa). GTP is bound by residues 17 to 22 and 134 to 137; these read DHGKST and NKMD.

This sequence belongs to the TRAFAC class translation factor GTPase superfamily. Classic translation factor GTPase family. LepA subfamily.

The protein resides in the cell inner membrane. It catalyses the reaction GTP + H2O = GDP + phosphate + H(+). In terms of biological role, required for accurate and efficient protein synthesis under certain stress conditions. May act as a fidelity factor of the translation reaction, by catalyzing a one-codon backward translocation of tRNAs on improperly translocated ribosomes. Back-translocation proceeds from a post-translocation (POST) complex to a pre-translocation (PRE) complex, thus giving elongation factor G a second chance to translocate the tRNAs correctly. Binds to ribosomes in a GTP-dependent manner. The protein is Elongation factor 4 of Hahella chejuensis (strain KCTC 2396).